Here is a 258-residue protein sequence, read N- to C-terminus: Phosphate import ATP-binding protein PstB (258 aa).

The ABC transporter domain occupies 5–253 (LDLNDVNIYY…PTKKETEDYI (249 aa)). ATP is bound at residue 37-44 (GPSGCGKS).

Belongs to the ABC transporter superfamily. Phosphate importer (TC 3.A.1.7) family. In terms of assembly, the complex is composed of two ATP-binding proteins (PstB), two transmembrane proteins (PstC and PstA) and a solute-binding protein (PstS).

The protein localises to the cell membrane. The enzyme catalyses phosphate(out) + ATP + H2O = ADP + 2 phosphate(in) + H(+). Functionally, part of the ABC transporter complex PstSACB involved in phosphate import. Responsible for energy coupling to the transport system. The protein is Phosphate import ATP-binding protein PstB of Corynebacterium jeikeium (strain K411).